We begin with the raw amino-acid sequence, 150 residues long: T-complex protein 1 subunit beta (150 aa).

Aspartate 35 is a Mg(2+) binding site. Residues glycine 36, threonine 37, threonine 38, and serine 39 each coordinate ADP. 3 residues coordinate ATP: glycine 36, threonine 37, and threonine 38.

The protein belongs to the TCP-1 chaperonin family. Component of the chaperonin-containing T-complex (TRiC), a hexadecamer composed of two identical back-to-back stacked rings enclosing a protein folding chamber. Each ring is made up of eight different subunits: TCP1/CCT1, CCT2, CCT3, CCT4, CCT5, CCT6A/CCT6, CCT7, CCT8. Interacts with PACRG. Interacts with FLCN. Interacts with DLEC1. Interacts with SVEP1.

The protein resides in the cytoplasm. It catalyses the reaction ATP + H2O = ADP + phosphate + H(+). Component of the chaperonin-containing T-complex (TRiC), a molecular chaperone complex that assists the folding of actin, tubulin and other proteins upon ATP hydrolysis. The TRiC complex mediates the folding of WRAP53/TCAB1, thereby regulating telomere maintenance. As part of the TRiC complex may play a role in the assembly of BBSome, a complex involved in ciliogenesis regulating transports vesicles to the cilia. The polypeptide is T-complex protein 1 subunit beta (Mesocricetus auratus (Golden hamster)).